Here is a 248-residue protein sequence, read N- to C-terminus: 2,3-bisphosphoglycerate-dependent phosphoglycerate mutase (248 aa).

Substrate contacts are provided by residues 8 to 15, 21 to 22, Arg60, 87 to 90, Lys98, 114 to 115, and 183 to 184; these read RHGESVWN, TG, ERHY, RR, and GN. The active-site Tele-phosphohistidine intermediate is His9. Residue Glu87 is the Proton donor/acceptor of the active site.

It belongs to the phosphoglycerate mutase family. BPG-dependent PGAM subfamily.

It carries out the reaction (2R)-2-phosphoglycerate = (2R)-3-phosphoglycerate. It functions in the pathway carbohydrate degradation; glycolysis; pyruvate from D-glyceraldehyde 3-phosphate: step 3/5. In terms of biological role, catalyzes the interconversion of 2-phosphoglycerate and 3-phosphoglycerate. The protein is 2,3-bisphosphoglycerate-dependent phosphoglycerate mutase of Brachyspira hyodysenteriae (strain ATCC 49526 / WA1).